Reading from the N-terminus, the 206-residue chain is Dephospho-CoA kinase (206 aa).

In terms of domain architecture, DPCK spans 4-204 (IVGLTGGIGS…HQYLQLANAQ (201 aa)). ATP is bound at residue 12-17 (GSGKST).

The protein belongs to the CoaE family.

It localises to the cytoplasm. The catalysed reaction is 3'-dephospho-CoA + ATP = ADP + CoA + H(+). The protein operates within cofactor biosynthesis; coenzyme A biosynthesis; CoA from (R)-pantothenate: step 5/5. In terms of biological role, catalyzes the phosphorylation of the 3'-hydroxyl group of dephosphocoenzyme A to form coenzyme A. The polypeptide is Dephospho-CoA kinase (Pasteurella multocida (strain Pm70)).